A 344-amino-acid polypeptide reads, in one-letter code: Nuclear distribution protein nudE homolog 1 (344 aa).

Residues 1–93 form a self-association region; sequence MEDSGKTFES…MQHSEGYRQI (93 aa). Residues 18–188 are a coiled coil; that stretch reads WRDLAMTYKQ…ELAVQQKQDK (171 aa). Residues 88 to 156 are interaction with PAFAH1B1; sequence EGYRQISALE…ERNAFLESEL (69 aa). Residues 167–290 are interaction with CENPF; the sequence is QRLKDEARDL…QSPSRTSGPA (124 aa). The interval 181-246 is disordered; the sequence is AVQQKQDKPR…DSSTSGTPLT (66 aa). S211 is subject to Phosphoserine. A phosphothreonine mark is found at T215 and T228. Phosphoserine is present on S239. A phosphothreonine mark is found at T243 and T246. A lipid anchor (S-palmitoyl cysteine; by ZDHHC2, ZDHHC3 and ZDHHC7) is attached at C274. Over residues 279–289 the composition is skewed to polar residues; that stretch reads YDQSPSRTSGP. The segment at 279–337 is disordered; the sequence is YDQSPSRTSGPASGRGTKNRDGVDRRPGSTSVGDKGSGKRLEFGKPASEPASPALPSAQ. S282 is modified (phosphoserine). Basic and acidic residues predominate over residues 296 to 305; it reads KNRDGVDRRP. Phosphoserine is present on S309. A compositionally biased stretch (low complexity) spans 324–336; sequence PASEPASPALPSA.

It belongs to the nudE family. As to quaternary structure, homodimer. Interacts with dynactin and PCM1. Interacts with CENPF, LIS1, CNTRL, dynein, tubulin gamma, PAFAH1B1, PCNT, SLMAP and TCP1. Interacts with ZNF365. Interacts with RAB9A; the interaction leads to RAB9A-dynein motor tethering. Interacts (via C-terminus) with MCRS1 (via C-terminus); phosphorylation of NDE1 inhibits the interaction. In terms of processing, phosphorylated in mitosis. Phosphorylation at Thr-246 is essential for the G2/M transition. As to expression, highly expressed in ovary. Also expressed in brain, heart, kidney, large intestine, liver, lung, small intestine and testis.

It is found in the cytoplasm. The protein resides in the cytoskeleton. The protein localises to the microtubule organizing center. Its subcellular location is the centrosome. It localises to the spindle. It is found in the chromosome. The protein resides in the centromere. The protein localises to the kinetochore. Its subcellular location is the cleavage furrow. It localises to the cytoplasmic vesicle membrane. Required for centrosome duplication and formation and function of the mitotic spindle. Essential for the development of the cerebral cortex. May regulate the production of neurons by controlling the orientation of the mitotic spindle during division of cortical neuronal progenitors of the proliferative ventricular zone of the brain. Orientation of the division plane perpendicular to the layers of the cortex gives rise to two proliferative neuronal progenitors whereas parallel orientation of the division plane yields one proliferative neuronal progenitor and a postmitotic neuron. A premature shift towards a neuronal fate within the progenitor population may result in an overall reduction in the final number of neurons and an increase in the number of neurons in the deeper layers of the cortex. Acts as a RAB9A/B effector that tethers RAB9-associated late endosomes to the dynein motor for their retrograde transport to the trans-Golgi network. This Mus musculus (Mouse) protein is Nuclear distribution protein nudE homolog 1.